Consider the following 1191-residue polypeptide: Serine/threonine-protein kinase dkf-2 (1191 aa).

Disordered regions lie at residues 11-48 and 108-155; these read YTSM…TTTS and MLSR…GGHV. Positions 123-139 are enriched in basic and acidic residues; that stretch reads TPDDHYSNPSDKRREVP. A compositionally biased stretch (low complexity) spans 140–150; it reads SIRSTSSNSSS. 2 Phorbol-ester/DAG-type zinc fingers span residues 314-364 and 466-531; these read PHTL…PNNC and PHTF…AKDC. The tract at residues 549–594 is disordered; that stretch reads VSEDRDDDLSLRSGSGGHKKAQNTPSAPLQGSEGSGSPGGAVVSFA. In terms of domain architecture, PH spans 632–713; it reads LLKEGWIVHY…VYFVYSSLTD (82 aa). The segment at 730–786 is disordered; the sequence is PSTVSSTDSGYLGSSGASSSCVRSREGSTVSSTITVDRTRRGGSTTSTENSEAESES. Positions 738–751 are enriched in low complexity; it reads SGYLGSSGASSSCV. Positions 756–765 are enriched in polar residues; that stretch reads GSTVSSTITV. Residues 773-786 are compositionally biased toward low complexity; it reads STTSTENSEAESES. Residues 891 to 1147 enclose the Protein kinase domain; sequence IFAEEVLGSG…VAKAQSHIWM (257 aa). Residues 897-905 and lysine 920 contribute to the ATP site; that span reads LGSGQFGTV. The active-site Proton acceptor is the aspartate 1014. 2 positions are modified to phosphoserine: serine 1046 and serine 1050.

It belongs to the protein kinase superfamily. CAMK Ser/Thr protein kinase family. PKD subfamily. Requires Mg(2+) as cofactor. In terms of processing, phosphorylation on Ser-1046 is the dominant regulator of catalysis, phosphorylation on Ser-1050 has a lesser effect. Prolonged phosphorylation results in ubiquitination and degradation.

The protein localises to the cytoplasm. It is found in the membrane. It catalyses the reaction L-seryl-[protein] + ATP = O-phospho-L-seryl-[protein] + ADP + H(+). The catalysed reaction is L-threonyl-[protein] + ATP = O-phospho-L-threonyl-[protein] + ADP + H(+). Its activity is regulated as follows. Activated by DAG and phorbol esters. Phorbol-ester/DAG-type domain 1 binds phorbol ester with low affinity. Phorbol-ester/DAG-type domain 2 binds phorbol ester with high affinity and targets the kinase to the cell periphery, enabling phosphorylation and activation by colocalized tpa-1. Both domains 1 and 2 appear to bind DAG with equal affinity so may contribute equally to translocation and activation. Functionally, converts transient diacylglycerol (DAG) signals into prolonged physiological effects, downstream of PKC. Acts in the intestine to regulate both innate immunity by promoting activation of pmk-1 and also stress response and life span by acting as an upstream, negative regulator of the daf-16 transcription factor. The polypeptide is Serine/threonine-protein kinase dkf-2 (Caenorhabditis briggsae).